The following is a 228-amino-acid chain: E3 ubiquitin-protein ligase RNF114 (228 aa).

Residues 29–68 form an RING-type zinc finger; the sequence is CPVCLEVYEKPVQVPCGHVFCSACLQECLKPKKPVCGVCR. C91 and C94 together coordinate Zn(2+). The C2HC RNF-type zinc finger occupies 91 to 110; that stretch reads CHGCRKKFFLSKIRSHVATC. Position 102 is an N6-acetyllysine (K102). Positions 106 and 110 each coordinate Zn(2+). K112 is modified (N6-acetyllysine).

As to quaternary structure, interacts with XAF1, the interaction increases XAF1 stability and proapoptotic effects, and may regulate IFN signaling. Autoubiquitinated. Polyubiquitinated in the presence of E2 enzymes UBE2D1, UBE2D2 and UBE2D3, but only monoubiquitinated in the presence of UBE2E1.

It is found in the cytoplasm. It localises to the nucleus. It catalyses the reaction S-ubiquitinyl-[E2 ubiquitin-conjugating enzyme]-L-cysteine + [acceptor protein]-L-lysine = [E2 ubiquitin-conjugating enzyme]-L-cysteine + N(6)-ubiquitinyl-[acceptor protein]-L-lysine.. Its pathway is protein modification; protein ubiquitination. Its function is as follows. E3 ubiquitin-protein ligase that promotes the ubiquitination of various substrates. In turn, participates in the regulation of many biological processes including cell cycle, apoptosis, osteoclastogenesis as well as innate or adaptive immunity. Acts as negative regulator of NF-kappa-B-dependent transcription by promoting the ubiquitination and stabilization of the NF-kappa-B inhibitor TNFAIP3. May promote the ubiquitination of TRAF6 as well. Also acts as a negative regulator of T-cell activation. Inhibits cellular dsRNA responses and interferon production by targeting MAVS component for proteasomal degradation. Ubiquitinates the CDK inhibitor CDKN1A leading to its degradationand probably also CDKN1B and CDKN1C. This activity stimulates cell cycle G1-to-S phase transition and suppresses cellular senescence. May play a role in spermatogenesis. The protein is E3 ubiquitin-protein ligase RNF114 (RNF114) of Pan troglodytes (Chimpanzee).